We begin with the raw amino-acid sequence, 476 residues long: MKMNPIVELFIKDFTKEVMEENAAIFAGAGLSMSVGYVSWAKLLEPIAQEIGLDVNKENDLVSLAQYYCNENQGNRGRINQIILDEFSRKVDLTENHKILARLPIHTYWTTNYDRLIEKALEEENKIADVKYTVKQLATTKVKRDAVVYKMHGDVEHPSEAVLIKDDYEKYSIKMDPYIKALSGDLVSKTFLFVGFSFTDPNLDYILSRVRSAYERDQRRHYCLIKKEERRPDELEADFEYRVRKQELFISDLSRFNIKTIVLNNYNEITEILQRIENNIKTKTVFLSGSAVEYNHWETEHAEQFIHQLSKELIRKDFNIVSGFGLGVGSFVINGVLEELYMNQGTIDDDRLILRPFPQGKKGEEQWDKYRRDMITRTGVSIFLYGNKIDKGQVVKAKGVQSEFNISFEQNNYVVPVGATGYIAKDLWNKVNEEFETYYPGADARMKKLFGELNNEALSIEELINTIIEFVEILSN.

The Deacetylase sirtuin-type domain occupies 4 to 283 (NPIVELFIKD…QRIENNIKTK (280 aa)). The NAD(+) site is built by Ala-23, Asp-114, and His-152. His-152 (proton acceptor) is an active-site residue. The segment at 284–476 (TVFLSGSAVE…IIEFVEILSN (193 aa)) is SLOG (STALD) domain, binds 3'cADPR. 8 residues coordinate 3'cADPR: Gly-289, Ser-290, Leu-326, Phe-357, Arg-371, Lys-388, Gly-399, and Glu-403.

It belongs to the soluble Thoeris ThsA family. In terms of assembly, homotetramer formed by dimer of dimers; homooctamers are occasionally seen. Not seen to interact with ThsB. In the absence of the signal generated by ThsB, 63% monomer and 20% homotetramer; in the presence of the ThsB signal product 40% of the protein is dimeric. Homotetramer in solution; probably dimerizes via the N-terminal sirtuin-like domain.

The protein resides in the cytoplasm. It catalyses the reaction NAD(+) + H2O = ADP-D-ribose + nicotinamide + H(+). With respect to regulation, activated by a molecule generated by endogenous ThsB (AC J8G8J6) or ThsB' (AC J8CSK2); activation in vitro is 50-100x more sensitive to 3' cyclic ADP-D-ribose (3'cADPR) than 2'cADPR. 3'cADPR activates the NADase function of ThsA by binding to the SLOG domain, which changes its tetramer organization, allowing NAD to access the active site. Also activated by a signal molecule generated by B.dafuensis TIR1 (AC A0A5B8Z670) and TIR2 (AC A0A5B8Z260), and by BdTIR (AC I1GTC2), a plant protein involved in defense against bacterial infection. The signal produced by BdTIR is probably 2'cADPR, which activates this protein, the signal produced by endogenous ThsB' is probably 3'cADPR. NAD(+) hydrolyzing component (NADase) of the Thoeris antiviral defense system, composed of ThsA and ThsB. Activated by a signal molecule generated by endogenous ThsB (AC J8G8J6) or ThsB' (AC J8CSK2, probably 3'cADPR), by TIR1 and TIR2 from B.dafuensis or by BdTIR from B.distachyon (AC I1GTC2, probably 2'cADPR). Upon activation binds and hydrolyzes NAD(+), leading to cell death and inhibition of phage replication. Not seen to bind DNA. Activation is 50-100x more sensitive to 3' cyclic ADP-D-ribose (3'cADPR) than 2'cADPR. In another paper ThsA is not activated by any tested cADPR isomer, although it binds 3'cADPR; it was suggested the protein is already in a fully active state. Expression of ThsA and ThsB in B.subtilis (strain BEST7003) confers resistance to phages phi29, SBSphiC, SBSphiJ and SPO1. At multiplicity of infection (MOI) of 0.05 Thoeris-encoding cultures grow normally when infected with SPO1, at MOI 5 cultures collapse prematurely by 90 minutes post-infection, thus the phage are not able to complete a replication cycle. NAD(+) levels fall and ADP-D-ribose levels rise 60 minutes post-infection. Thoeris cultures eventually recover, but retain the same susceptibility to SPO1. This chain is NAD(+) hydrolase ThsA, found in Bacillus cereus (strain MSX-D12).